A 97-amino-acid chain; its full sequence is MALLIIILSMFYLGLMGILLNRLHFLSILLCLELLLISLFIGIATWNTSNSIPQNTTFNLLLLTLSACEASIGLSLMVALSRTHSSDLVASLSLLQY.

3 helical membrane-spanning segments follow: residues 1-21 (MALLIIILSMFYLGLMGILLN), 23-43 (LHFLSILLCLELLLISLFIGI), and 60-80 (LLLLTLSACEASIGLSLMVAL).

The protein belongs to the complex I subunit 4L family.

Its subcellular location is the mitochondrion membrane. It catalyses the reaction a ubiquinone + NADH + 5 H(+)(in) = a ubiquinol + NAD(+) + 4 H(+)(out). Its function is as follows. Core subunit of the mitochondrial membrane respiratory chain NADH dehydrogenase (Complex I) that is believed to belong to the minimal assembly required for catalysis. Complex I functions in the transfer of electrons from NADH to the respiratory chain. The immediate electron acceptor for the enzyme is believed to be ubiquinone. In Paracentrotus lividus (Common sea urchin), this protein is NADH-ubiquinone oxidoreductase chain 4L (ND4L).